We begin with the raw amino-acid sequence, 216 residues long: Eukaryotic translation initiation factor 3 subunit K (216 aa).

The PCI domain occupies 40 to 202; it reads YDLDANLAVL…HIKSKNIAEK (163 aa).

Belongs to the eIF-3 subunit K family. In terms of assembly, component of the eukaryotic translation initiation factor 3 (eIF-3) complex.

The protein resides in the cytoplasm. Functionally, component of the eukaryotic translation initiation factor 3 (eIF-3) complex, which is involved in protein synthesis of a specialized repertoire of mRNAs and, together with other initiation factors, stimulates binding of mRNA and methionyl-tRNAi to the 40S ribosome. The eIF-3 complex specifically targets and initiates translation of a subset of mRNAs involved in cell proliferation. This chain is Eukaryotic translation initiation factor 3 subunit K, found in Nematostella vectensis (Starlet sea anemone).